Here is a 265-residue protein sequence, read N- to C-terminus: Cell adhesion molecule CEACAM10 (265 aa).

A signal peptide spans 1-33; that stretch reads MELASAHLHKGQVPWVGLLLTASLLTYWSPATT. Ig-like V-type domains follow at residues 35–142 and 155–262; these read QVTV…HVHP and QVTV…NVHA. 3 N-linked (GlcNAc...) asparagine glycosylation sites follow: asparagine 44, asparagine 87, and asparagine 224.

The protein belongs to the immunoglobulin superfamily. CEA family. As to expression, abundant in seminal vesicle and traces in epididymis and prostate (at protein level). Highly expressed in seminal vesicle, minor in colon and placenta and, to a lesser extent, in small intestine, caecum, stomach, salivary gland and bone marrow.

Its subcellular location is the secreted. The protein resides in the extracellular space. Functionally, may interact with other CEACAM proteins on the sperm surface. This is Cell adhesion molecule CEACAM10 from Mus musculus (Mouse).